A 60-amino-acid chain; its full sequence is Large ribosomal subunit protein uL30 (60 aa).

The protein belongs to the universal ribosomal protein uL30 family. Part of the 50S ribosomal subunit.

The protein is Large ribosomal subunit protein uL30 of Streptococcus pneumoniae serotype 2 (strain D39 / NCTC 7466).